The sequence spans 445 residues: tRNA modification GTPase MnmE (445 aa).

Positions 20, 79, and 119 each coordinate (6S)-5-formyl-5,6,7,8-tetrahydrofolate. The TrmE-type G domain occupies 215–371 (GLKLAIVGPP…ILKNIENIAE (157 aa)). Residue N225 participates in K(+) binding. Residues 225–230 (NTGKSS), 244–250 (SNIAGTT), and 269–272 (DTAG) contribute to the GTP site. Position 229 (S229) interacts with Mg(2+). K(+) is bound by residues S244, I246, and T249. T250 lines the Mg(2+) pocket. K445 serves as a coordination point for (6S)-5-formyl-5,6,7,8-tetrahydrofolate.

The protein belongs to the TRAFAC class TrmE-Era-EngA-EngB-Septin-like GTPase superfamily. TrmE GTPase family. In terms of assembly, homodimer. Heterotetramer of two MnmE and two MnmG subunits. K(+) serves as cofactor.

The protein localises to the cytoplasm. Exhibits a very high intrinsic GTPase hydrolysis rate. Involved in the addition of a carboxymethylaminomethyl (cmnm) group at the wobble position (U34) of certain tRNAs, forming tRNA-cmnm(5)s(2)U34. The protein is tRNA modification GTPase MnmE of Rickettsia akari (strain Hartford).